Reading from the N-terminus, the 175-residue chain is MKLCLVAFDGRIPMLSSIVDRFEEHVSEYLGEVKVKKKRAKLPEHAYSKVRGQYLARALLDTLRGMKGEYDRVLGLTSEDLYAPGLNFVFGQARCPGREAVVSVARLLDPDPELYLERVVKELTHELGHTFGLGHCPDRNCVMSFSSSLLEVDRKSPNFCRRCTELLQRNLKRGG.

Position 125 (His-125) interacts with Zn(2+). Glu-126 acts as the Proton acceptor in catalysis. Zn(2+) is bound by residues His-129, His-135, Cys-136, Cys-141, Cys-160, and Cys-163.

The protein belongs to the peptidase M54 family. As to quaternary structure, monomer. Requires Zn(2+) as cofactor.

Probable zinc metalloprotease whose natural substrate is unknown. Does not show endo- or exopeptidase activity against resorufin labeled casein, p-nitroanilide (pNA), amidomethylcoumarin (AMC) (one to three amino acids in length), and hippuryl-aminoacid substrates. The chain is Archaemetzincin from Methanopyrus kandleri (strain AV19 / DSM 6324 / JCM 9639 / NBRC 100938).